The primary structure comprises 147 residues: Endoribonuclease YbeY (147 aa).

Residues His108, His112, and His118 each coordinate Zn(2+).

This sequence belongs to the endoribonuclease YbeY family. Zn(2+) is required as a cofactor.

The protein localises to the cytoplasm. Functionally, single strand-specific metallo-endoribonuclease involved in late-stage 70S ribosome quality control and in maturation of the 3' terminus of the 16S rRNA. The protein is Endoribonuclease YbeY of Sulfurovum sp. (strain NBC37-1).